Consider the following 184-residue polypeptide: Dual-action ribosomal maturation protein DarP (184 aa).

The interval 1-27 is disordered; sequence MSIPDTEIPVDDDGYDENGYDRPSKSQ. Acidic residues predominate over residues 8–18; the sequence is IPVDDDGYDEN.

It belongs to the DarP family.

The protein resides in the cytoplasm. Member of a network of 50S ribosomal subunit biogenesis factors which assembles along the 30S-50S interface, preventing incorrect 23S rRNA structures from forming. Promotes peptidyl transferase center (PTC) maturation. This Bordetella avium (strain 197N) protein is Dual-action ribosomal maturation protein DarP.